A 386-amino-acid polypeptide reads, in one-letter code: Cytochrome b (386 aa).

4 helical membrane passes run 32–52, 76–98, 113–133, and 179–199; these read LGSLLGLCLVIQICTGIFLAM, WFIRYAHANGASFFFICMYIHIG, VWNVGVIIFVLTMAAAFLGYC, and FFAFHYLVPFIIAAFVIMHFM. Residues His82 and His96 each coordinate heme b. Residues His183 and His197 each contribute to the heme b site. A ubiquinone is bound at residue His202. 4 consecutive transmembrane segments (helical) span residues 225-245, 289-309, 321-341, and 348-368; these read FIFKDLITVFVFLFFFSLFVF, LLGVLAMFGAILILLVLPITD, FSKFFFFLFIANFVLLGHLGE, and FVVMGQIATVIYFAYFLVIVP.

It belongs to the cytochrome b family. Fungal cytochrome b-c1 complex contains 10 subunits; 3 respiratory subunits, 2 core proteins and 5 low-molecular weight proteins. Cytochrome b-c1 complex is a homodimer. Heme b is required as a cofactor.

The protein resides in the mitochondrion inner membrane. Functionally, component of the ubiquinol-cytochrome c reductase complex (complex III or cytochrome b-c1 complex) that is part of the mitochondrial respiratory chain. The b-c1 complex mediates electron transfer from ubiquinol to cytochrome c. Contributes to the generation of a proton gradient across the mitochondrial membrane that is then used for ATP synthesis. In Kluyveromyces lactis (strain ATCC 8585 / CBS 2359 / DSM 70799 / NBRC 1267 / NRRL Y-1140 / WM37) (Yeast), this protein is Cytochrome b (COB).